Consider the following 205-residue polypeptide: Imidazole glycerol phosphate synthase subunit HisH (205 aa).

In terms of domain architecture, Glutamine amidotransferase type-1 spans 1-205 (MIALVDYGGG…FFKMALGDKK (205 aa)). C79 acts as the Nucleophile in catalysis. Catalysis depends on residues H181 and E183.

As to quaternary structure, heterodimer of HisH and HisF.

It localises to the cytoplasm. It carries out the reaction 5-[(5-phospho-1-deoxy-D-ribulos-1-ylimino)methylamino]-1-(5-phospho-beta-D-ribosyl)imidazole-4-carboxamide + L-glutamine = D-erythro-1-(imidazol-4-yl)glycerol 3-phosphate + 5-amino-1-(5-phospho-beta-D-ribosyl)imidazole-4-carboxamide + L-glutamate + H(+). The catalysed reaction is L-glutamine + H2O = L-glutamate + NH4(+). It participates in amino-acid biosynthesis; L-histidine biosynthesis; L-histidine from 5-phospho-alpha-D-ribose 1-diphosphate: step 5/9. In terms of biological role, IGPS catalyzes the conversion of PRFAR and glutamine to IGP, AICAR and glutamate. The HisH subunit catalyzes the hydrolysis of glutamine to glutamate and ammonia as part of the synthesis of IGP and AICAR. The resulting ammonia molecule is channeled to the active site of HisF. The chain is Imidazole glycerol phosphate synthase subunit HisH from Dehalococcoides mccartyi (strain CBDB1).